The chain runs to 1183 residues: DNA-directed RNA polymerase subunit beta (1183 aa).

It belongs to the RNA polymerase beta chain family. As to quaternary structure, the RNAP catalytic core consists of 2 alpha, 1 beta, 1 beta' and 1 omega subunit. When a sigma factor is associated with the core the holoenzyme is formed, which can initiate transcription.

The catalysed reaction is RNA(n) + a ribonucleoside 5'-triphosphate = RNA(n+1) + diphosphate. Its function is as follows. DNA-dependent RNA polymerase catalyzes the transcription of DNA into RNA using the four ribonucleoside triphosphates as substrates. This Staphylococcus aureus (strain Mu50 / ATCC 700699) protein is DNA-directed RNA polymerase subunit beta.